A 353-amino-acid polypeptide reads, in one-letter code: Quinolinate synthase (353 aa).

Positions 47 and 68 each coordinate iminosuccinate. Cys-113 serves as a coordination point for [4Fe-4S] cluster. Iminosuccinate-binding positions include 139 to 141 and Ser-156; that span reads YAN. Residue Cys-200 participates in [4Fe-4S] cluster binding. Iminosuccinate-binding positions include 226 to 228 and Thr-243; that span reads HPE. [4Fe-4S] cluster is bound at residue Cys-297.

Belongs to the quinolinate synthase family. Type 1 subfamily. [4Fe-4S] cluster is required as a cofactor.

Its subcellular location is the cytoplasm. It carries out the reaction iminosuccinate + dihydroxyacetone phosphate = quinolinate + phosphate + 2 H2O + H(+). Its pathway is cofactor biosynthesis; NAD(+) biosynthesis; quinolinate from iminoaspartate: step 1/1. In terms of biological role, catalyzes the condensation of iminoaspartate with dihydroxyacetone phosphate to form quinolinate. The polypeptide is Quinolinate synthase (Pectobacterium carotovorum subsp. carotovorum (strain PC1)).